The primary structure comprises 521 residues: Bifunctional purine biosynthesis protein PurH (521 aa).

Residues Met1–Val145 enclose the MGS-like domain.

This sequence belongs to the PurH family.

It carries out the reaction (6R)-10-formyltetrahydrofolate + 5-amino-1-(5-phospho-beta-D-ribosyl)imidazole-4-carboxamide = 5-formamido-1-(5-phospho-D-ribosyl)imidazole-4-carboxamide + (6S)-5,6,7,8-tetrahydrofolate. It catalyses the reaction IMP + H2O = 5-formamido-1-(5-phospho-D-ribosyl)imidazole-4-carboxamide. Its pathway is purine metabolism; IMP biosynthesis via de novo pathway; 5-formamido-1-(5-phospho-D-ribosyl)imidazole-4-carboxamide from 5-amino-1-(5-phospho-D-ribosyl)imidazole-4-carboxamide (10-formyl THF route): step 1/1. It participates in purine metabolism; IMP biosynthesis via de novo pathway; IMP from 5-formamido-1-(5-phospho-D-ribosyl)imidazole-4-carboxamide: step 1/1. In Burkholderia pseudomallei (strain 1106a), this protein is Bifunctional purine biosynthesis protein PurH.